Consider the following 80-residue polypeptide: Cell division activator CedA (80 aa).

This sequence belongs to the CedA family.

Its function is as follows. Activates the cell division inhibited by chromosomal DNA over-replication. The chain is Cell division activator CedA from Salmonella arizonae (strain ATCC BAA-731 / CDC346-86 / RSK2980).